The chain runs to 389 residues: MERVILIVFDSVGIGELPDAKEYGDVGSNTLGNISKAAGGLEIPTLYKLGIGNIQGVENLRRCEKPIGSFGKCAELSKGKDTVTGHWEMAGIVLKTPLNTYPQGFPEDIIEEFQVKIGRKVLGNKVASGTEIINELGKEHVDTGYPIVYTSADSVFQVAAHEKIIPVEELYKMCKIAREMLLGDRTVGRVIARPFIYDKGKYVRTSNRKDFALDPPGKTMLDYIKEVGLDVMAVGKIEDIYNKRGITEAVHIKNNMDGIDKTLGYMKKNKSGLIFANLVDFDMLYGHRNDTEGYAKALVEADKRIPEIISNMNEEDVLIITADHGCDPTTKSTDHSREYIPVLVYGKNLKAGVDIGIRKSYSDIGKTILELLDIKNNLQGIGFKDLINK.

Residues aspartate 10, aspartate 282, histidine 287, aspartate 323, histidine 324, and histidine 335 each coordinate Mn(2+).

The protein belongs to the phosphopentomutase family. Requires Mn(2+) as cofactor.

The protein localises to the cytoplasm. It catalyses the reaction 2-deoxy-alpha-D-ribose 1-phosphate = 2-deoxy-D-ribose 5-phosphate. It carries out the reaction alpha-D-ribose 1-phosphate = D-ribose 5-phosphate. It functions in the pathway carbohydrate degradation; 2-deoxy-D-ribose 1-phosphate degradation; D-glyceraldehyde 3-phosphate and acetaldehyde from 2-deoxy-alpha-D-ribose 1-phosphate: step 1/2. Functionally, isomerase that catalyzes the conversion of deoxy-ribose 1-phosphate (dRib-1-P) and ribose 1-phosphate (Rib-1-P) to deoxy-ribose 5-phosphate (dRib-5-P) and ribose 5-phosphate (Rib-5-P), respectively. The protein is Phosphopentomutase of Clostridium kluyveri (strain NBRC 12016).